The primary structure comprises 670 residues: MERNGGHYTDKTRVLDIKPLRTLRPVFPSGNQAPPFVCAPPFGPFPPGFSSFYPFSSSQANQHTPDLNQAQYPPQHQQPQNPPPVYQQQPPQHASEPSLVTPLRSFRSPDVSNGNAELEGSTVKRRIPKKRPISRPENMNFESGINVADRENGNRELVLSVLMRFDALRRRFAQLEDAKEAVSGIIKRPDLKSGSTCMGRGVRTNTKKRPGIVPGVEIGDVFFFRFEMCLVGLHSPSMAGIDYLVVKGETEEEPIATSIVSSGYYDNDEGNPDVLIYTGQGGNADKDKQSSDQKLERGNLALEKSLRRDSAVRVIRGLKEASHNAKIYIYDGLYEIKESWVEKGKSGHNTFKYKLVRAPGQPPAFASWTAIQKWKTGVPSRQGLILPDMTSGVESIPVSLVNEVDTDNGPAYFTYSTTVKYSESFKLMQPSFGCDCANLCKPGNLDCHCIRKNGGDFPYTGNGILVSRKPMIYECSPSCPCSTCKNKVTQMGVKVRLEVFKTANRGWGLRSWDAIRAGSFICIYVGEAKDKSKVQQTMANDDYTFDTTNVYNPFKWNYEPGLADEDACEEMSEESEIPLPLIISAKNVGNVARFMNHSCSPNVFWQPVSYENNSQLFVHVAFFAISHIPPMTELTYDYGVSRPSGTQNGNPLYGKRKCFCGSAYCRGSFG.

Residues 53-140 form a disordered region; that stretch reads YPFSSSQANQ…RPISRPENMN (88 aa). Low complexity predominate over residues 68–79; that stretch reads NQAQYPPQHQQP. Over residues 123–133 the composition is skewed to basic residues; sequence VKRRIPKKRPI. The YDG domain maps to 211-357; sequence GIVPGVEIGD…HNTFKYKLVR (147 aa). The Pre-SET domain occupies 432-492; sequence FGCDCANLCK…TCKNKVTQMG (61 aa). Zn(2+) is bound by residues Cys434, Cys436, Cys440, Cys447, Cys449, Cys475, Cys479, Cys481, and Cys484. One can recognise an SET domain in the interval 495 to 639; sequence VRLEVFKTAN…PMTELTYDYG (145 aa). Residues 505 to 507, Asp541, Tyr543, Arg593, and 596 to 597 each bind S-adenosyl-L-methionine; these read RGW and NH. Residues Cys599, Cys658, Cys660, and Cys665 each coordinate Zn(2+). Residues 654–670 form the Post-SET domain; the sequence is GKRKCFCGSAYCRGSFG.

Belongs to the class V-like SAM-binding methyltransferase superfamily. Histone-lysine methyltransferase family. Suvar3-9 subfamily. As to expression, expressed in leaves stems and flowers.

The protein resides in the nucleus. It is found in the chromosome. The protein localises to the centromere. The enzyme catalyses L-lysyl(9)-[histone H3] + 2 S-adenosyl-L-methionine = N(6),N(6)-dimethyl-L-lysyl(9)-[histone H3] + 2 S-adenosyl-L-homocysteine + 2 H(+). Functionally, histone methyltransferase. Methylates 'Lys-9' of histone H3. H3 'Lys-9' methylation represents a specific tag for epigenetic transcriptional repression. The sequence is that of Histone-lysine N-methyltransferase, H3 lysine-9 specific SUVH1 (SUVH1) from Arabidopsis thaliana (Mouse-ear cress).